Consider the following 1020-residue polypeptide: 5'-3' exoribonuclease 3 (1020 aa).

The tract at residues 113-144 (QQRSRRFRSAKDASDAAAEEERLREEFEREGR) is disordered. The span at 121-144 (SAKDASDAAAEEERLREEFEREGR) shows a compositional bias: basic and acidic residues. A CCHC-type zinc finger spans residues 262-279 (ERCFLCGQMGHFASNCEG). 2 disordered regions span residues 411–440 (QHQRQAERVKRDKAGKATKRMDDEAPTVQP) and 452–483 (RLASAPTPSPFQSNDGRSAPHQKVRRLSPGSS). Basic and acidic residues predominate over residues 414-433 (RQAERVKRDKAGKATKRMDD). A coiled-coil region spans residues 487–523 (AIVDVENSLESDERENKEELKTKLKELIREKSDAFNS). The span at 831–844 (NNHGMHNNHGMHNN) shows a compositional bias: low complexity. Disordered stretches follow at residues 831 to 859 (NNHGMHNNHGMHNNQGRQNPPGSVSGRHL), 875 to 897 (TDRYQTPTDVPAPGYGYNPPQYV), and 911 to 1020 (PGAQ…RHRY). Composition is skewed to low complexity over residues 911–923 (PGAQGYAQPAPYQ) and 960–972 (GNHQNQHQQQQWH). A compositionally biased stretch (basic residues) spans 1000–1020 (RGRGRGSHHHHDQGGNPRHRY).

It belongs to the 5'-3' exonuclease family. XRN2/RAT1 subfamily. As to expression, expressed in roots, leaves, stems and flowers.

Its subcellular location is the nucleus. Functionally, possesses 5'-&gt;3' exoribonuclease activity. Acts as an endogenous post-transcriptional gene silencing (PTGS) suppressor. Degrades miRNA-derived loops, excised during miRNA maturation in the nucleus. Required for proper development. Involved in pre-rRNA processing. Involved with XRN2 in the 5'-end exonucleolytic processing of 5.8S and 25S rRNAs. Contributes with XRN2 to polyadenylation-dependent nuclear RNA surveillance. Involved in the degradation of aberrant polyadenylated pre-rRNA through 5'-end processing. In Arabidopsis thaliana (Mouse-ear cress), this protein is 5'-3' exoribonuclease 3.